The sequence spans 446 residues: Alkylglycerol monooxygenase (446 aa).

The next 2 helical transmembrane spans lie at 39-59 (VNQA…LGWL) and 103-123 (FHFL…FLGV). The Fatty acid hydroxylase domain maps to 117 to 248 (WLAFLGVDMG…LIIWDRMFGT (132 aa)). Residues 131-135 (HRFAH) carry the Histidine box-1 motif. The Histidine box-2 signature appears at 144-148 (HQVHH). A helical membrane pass occupies residues 167–187 (FSSWIFYSPLALLIPPSVFAV). The Histidine box-3 motif lies at 220 to 224 (HRVHH). Helical transmembrane passes span 329–349 (AWSP…LDVY), 362–382 (LTVI…GFLI), and 410–430 (PLLP…TIYW).

Belongs to the sterol desaturase family. TMEM195 subfamily. It depends on Fe cation as a cofactor.

The protein resides in the endoplasmic reticulum membrane. The enzyme catalyses 1-O-(1,2-saturated-alkyl)-sn-glycerol + (6R)-L-erythro-5,6,7,8-tetrahydrobiopterin + O2 = a 1-(1-hydroxyalkyl)-sn-glycerol + (6R)-L-erythro-6,7-dihydrobiopterin + H2O. Its function is as follows. Glyceryl-ether monooxygenase that cleaves the O-alkyl bond of ether lipids. Ether lipids are essential components of brain membranes. The sequence is that of Alkylglycerol monooxygenase (agmo) from Danio rerio (Zebrafish).